Reading from the N-terminus, the 211-residue chain is MSASLFQRLTGLRVSRETYEKLDHFVDLFGKWSKVINLVANSTKDQIWHRHVIDSAQLFKLRPNPQHWIDLGSGGGFPGVITAILLSEKSDGWVDLVESNNKKAAFLRTALMETGARGRVHPVRIEEAHKSLSDCDTISARALADLDLLFSYASPWAEKNKNLNFLLHKGRDYQSEVNNARDRWTFDLIIHPSVLEADSVILEVSGLARSK.

Residues G72, F77, 125–126 (IE), and R141 each bind S-adenosyl-L-methionine.

It belongs to the methyltransferase superfamily. RNA methyltransferase RsmG family.

It localises to the cytoplasm. It catalyses the reaction guanosine(527) in 16S rRNA + S-adenosyl-L-methionine = N(7)-methylguanosine(527) in 16S rRNA + S-adenosyl-L-homocysteine. In terms of biological role, specifically methylates the N7 position of guanine in position 527 of 16S rRNA. In Allorhizobium ampelinum (strain ATCC BAA-846 / DSM 112012 / S4) (Agrobacterium vitis (strain S4)), this protein is Ribosomal RNA small subunit methyltransferase G.